The following is a 720-amino-acid chain: ATP-dependent RNA helicase glh-3 (720 aa).

Residues 1–11 (MDKSPTKTSIR) show a composition bias toward polar residues. Disordered regions lie at residues 1–34 (MDKS…SCIK) and 125–180 (LNSR…SYGN). 2 stretches are compositionally biased toward basic and acidic residues: residues 141-154 (NVKE…RSDD) and 162-172 (SAKDEERDRDS). CCHC-type zinc fingers lie at residues 202–219 (NTCF…ECSA) and 222–239 (RECA…ECAS). A Q motif motif is present at residues 298–326 (KSFSDSDIPQSMRRNVERAGYTRTTPIQQ). The Helicase ATP-binding domain occupies 329 to 513 (LPLVADGKDI…RKLLREDYTM (185 aa)). 342–349 (AQTGSGKT) provides a ligand contact to ATP. A DEAD box motif is present at residues 456-459 (DEAD). The Helicase C-terminal domain occupies 549–698 (DIDTYTTEKN…VVPSWMKEAA (150 aa)). The tract at residues 696 to 720 (EAAGGTSNPNKFEKSIDTEEPEEAW) is disordered.

Belongs to the DEAD box helicase family. DDX4/VASA subfamily. Interacts with csn-5. Interacts (via C-terminus) with kgb-1. Interacts with zyx-1.

Its subcellular location is the cytoplasm. The enzyme catalyses ATP + H2O = ADP + phosphate + H(+). In terms of biological role, probable ATP-binding RNA helicase. The protein is ATP-dependent RNA helicase glh-3 of Caenorhabditis elegans.